Here is a 764-residue protein sequence, read N- to C-terminus: Oxysterol-binding protein-related protein 10 (764 aa).

The interval 1 to 74 (MERAVQGTDG…PSGGGGRRRE (74 aa)) is disordered. 2 stretches are compositionally biased toward low complexity: residues 15 to 47 (NSSS…SAAA) and 55 to 65 (RSSPGSVAASP). A phosphoserine mark is found at Ser-29 and Ser-30. Omega-N-methylarginine is present on Arg-38. A phosphoserine mark is found at Ser-57, Ser-60, and Ser-64. In terms of domain architecture, PH spans 74–171 (EPALEGVLSK…WVTQLRACAK (98 aa)). Phosphothreonine is present on Thr-196. Ser-201, Ser-209, and Ser-223 each carry phosphoserine. 2 disordered regions span residues 304–335 (GQPS…NGTL) and 354–391 (AEDE…TELG). Residues 359-370 (TSQPEPEPNSGS) show a composition bias toward polar residues. Residues 374 to 389 (LSEDEKSDNEDKEETE) show a composition bias toward acidic residues. Residues 413-418 (LTKVVL) and 477-480 (KPYN) each bind a 1,2-diacyl-sn-glycero-3-phospho-(1D-myo-inositol 4-phosphate). A 1,2-diacyl-sn-glycero-3-phospho-L-serine is bound by residues 413 to 418 (LTKVVL) and Asn-480. Residues 501–520 (KRTASRSPASCHEHPMADDP) are disordered. Positions 511–520 (CHEHPMADDP) are enriched in basic and acidic residues. A 1,2-diacyl-sn-glycero-3-phospho-(1D-myo-inositol 4-phosphate) is bound at residue 535-536 (HH). Ser-561 is an a 1,2-diacyl-sn-glycero-3-phospho-L-serine binding site. A coiled-coil region spans residues 713–740 (DIDAATEQKRHLEEKQRVEERKRENLRT). A 1,2-diacyl-sn-glycero-3-phospho-(1D-myo-inositol 4-phosphate) is bound by residues Lys-721, Glu-725, and Arg-729.

The protein belongs to the OSBP family. In terms of assembly, interacts with OSBPL9. Interacts with DIAPH1.

It is found in the cytoplasm. The protein localises to the cytoskeleton. Probable lipid transporter involved in lipid countertransport between the endoplasmic reticulum and the plasma membrane. Its ability to bind phosphatidylserine, suggests that it specifically exchanges phosphatidylserine with phosphatidylinositol 4-phosphate (PI4P), delivering phosphatidylserine to the plasma membrane in exchange for PI4P. Plays a role in negative regulation of lipid biosynthesis. Negatively regulates APOB secretion from hepatocytes. Binds cholesterol and acidic phospholipids. Also binds 25-hydroxycholesterol. Binds phosphatidylserine. This chain is Oxysterol-binding protein-related protein 10 (OSBPL10), found in Homo sapiens (Human).